The following is a 192-amino-acid chain: Thymidine kinase (192 aa).

ATP-binding positions include 9–16 (ASMNAGKS) and 87–90 (DEAQ). Residue Glu88 is the Proton acceptor of the active site. Residues Cys145, Cys147, Cys182, and His185 each coordinate Zn(2+).

It belongs to the thymidine kinase family. Homotetramer.

It is found in the cytoplasm. The catalysed reaction is thymidine + ATP = dTMP + ADP + H(+). The protein is Thymidine kinase of Novosphingobium aromaticivorans (strain ATCC 700278 / DSM 12444 / CCUG 56034 / CIP 105152 / NBRC 16084 / F199).